The following is a 71-amino-acid chain: MAEDVRAEIVASVLEVVVNEGDQIDKGDVVVLLESMKMEIPVLAEAAGTVSKVAVSVGDVIQAGDLIAVIS.

In terms of domain architecture, Biotinyl-binding spans 2–71 (AEDVRAEIVA…QAGDLIAVIS (70 aa)). The residue at position 37 (K37) is an N6-biotinyllysine.

The protein is Biotinylated protein TB7.3 of Mycobacterium bovis (strain ATCC BAA-935 / AF2122/97).